The primary structure comprises 215 residues: UPF0502 protein YceH (215 aa).

This sequence belongs to the UPF0502 family.

This Salmonella arizonae (strain ATCC BAA-731 / CDC346-86 / RSK2980) protein is UPF0502 protein YceH.